A 296-amino-acid chain; its full sequence is N-acetylmuramic acid 6-phosphate etherase (296 aa).

Residues 54–217 (VTESFRKGGR…STTSMVGIGK (164 aa)) form the SIS domain. Glutamate 82 (proton donor) is an active-site residue. Residue glutamate 113 is part of the active site.

It belongs to the GCKR-like family. MurNAc-6-P etherase subfamily. Homodimer.

It carries out the reaction N-acetyl-D-muramate 6-phosphate + H2O = N-acetyl-D-glucosamine 6-phosphate + (R)-lactate. It functions in the pathway amino-sugar metabolism; N-acetylmuramate degradation. Its function is as follows. Specifically catalyzes the cleavage of the D-lactyl ether substituent of MurNAc 6-phosphate, producing GlcNAc 6-phosphate and D-lactate. This Listeria welshimeri serovar 6b (strain ATCC 35897 / DSM 20650 / CCUG 15529 / CIP 8149 / NCTC 11857 / SLCC 5334 / V8) protein is N-acetylmuramic acid 6-phosphate etherase.